Consider the following 1197-residue polypeptide: ATP-dependent helicase/nuclease subunit A (1197 aa).

One can recognise a UvrD-like helicase ATP-binding domain in the interval 2-458 (RQWTKEQQAA…IDLAKNFRSR (457 aa)). 23–30 (AAAGSGKT) is an ATP binding site. The UvrD-like helicase C-terminal domain occupies 485–774 (RAALYQGTEF…RIMSIHKSKG (290 aa)).

The protein belongs to the helicase family. AddA subfamily. In terms of assembly, heterodimer of AddA and AddB/RexB. Mg(2+) is required as a cofactor.

The enzyme catalyses Couples ATP hydrolysis with the unwinding of duplex DNA by translocating in the 3'-5' direction.. It carries out the reaction ATP + H2O = ADP + phosphate + H(+). In terms of biological role, the heterodimer acts as both an ATP-dependent DNA helicase and an ATP-dependent, dual-direction single-stranded exonuclease. Recognizes the chi site generating a DNA molecule suitable for the initiation of homologous recombination. The AddA nuclease domain is required for chi fragment generation; this subunit has the helicase and 3' -&gt; 5' nuclease activities. This Alkaliphilus oremlandii (strain OhILAs) (Clostridium oremlandii (strain OhILAs)) protein is ATP-dependent helicase/nuclease subunit A.